The following is a 762-amino-acid chain: uncharacterized protein (762 aa).

In terms of domain architecture, MCM spans 334-542; that stretch reads IIDILSNYLI…SDEEIAEHIL (209 aa). Residue 384 to 391 participates in ATP binding; the sequence is TDPGIGKS.

The protein belongs to the MCM family.

This is an uncharacterized protein from Methanocaldococcus jannaschii (strain ATCC 43067 / DSM 2661 / JAL-1 / JCM 10045 / NBRC 100440) (Methanococcus jannaschii).